Reading from the N-terminus, the 287-residue chain is Phosphatidylserine decarboxylase proenzyme (287 aa).

Residues aspartate 89, histidine 146, and serine 252 each act as charge relay system; for autoendoproteolytic cleavage activity in the active site. Serine 252 serves as the catalytic Schiff-base intermediate with substrate; via pyruvic acid; for decarboxylase activity. Serine 252 carries the post-translational modification Pyruvic acid (Ser); by autocatalysis.

The protein belongs to the phosphatidylserine decarboxylase family. PSD-B subfamily. Prokaryotic type I sub-subfamily. In terms of assembly, heterodimer of a large membrane-associated beta subunit and a small pyruvoyl-containing alpha subunit. Pyruvate is required as a cofactor. Post-translationally, is synthesized initially as an inactive proenzyme. Formation of the active enzyme involves a self-maturation process in which the active site pyruvoyl group is generated from an internal serine residue via an autocatalytic post-translational modification. Two non-identical subunits are generated from the proenzyme in this reaction, and the pyruvate is formed at the N-terminus of the alpha chain, which is derived from the carboxyl end of the proenzyme. The autoendoproteolytic cleavage occurs by a canonical serine protease mechanism, in which the side chain hydroxyl group of the serine supplies its oxygen atom to form the C-terminus of the beta chain, while the remainder of the serine residue undergoes an oxidative deamination to produce ammonia and the pyruvoyl prosthetic group on the alpha chain. During this reaction, the Ser that is part of the protease active site of the proenzyme becomes the pyruvoyl prosthetic group, which constitutes an essential element of the active site of the mature decarboxylase.

The protein localises to the cell membrane. The enzyme catalyses a 1,2-diacyl-sn-glycero-3-phospho-L-serine + H(+) = a 1,2-diacyl-sn-glycero-3-phosphoethanolamine + CO2. The protein operates within phospholipid metabolism; phosphatidylethanolamine biosynthesis; phosphatidylethanolamine from CDP-diacylglycerol: step 2/2. Catalyzes the formation of phosphatidylethanolamine (PtdEtn) from phosphatidylserine (PtdSer). This is Phosphatidylserine decarboxylase proenzyme from Shewanella halifaxensis (strain HAW-EB4).